Reading from the N-terminus, the 215-residue chain is UPF0502 protein YceH (215 aa).

Lysine 80 is modified (N6-acetyllysine).

The protein belongs to the UPF0502 family.

The protein is UPF0502 protein YceH of Escherichia coli O157:H7.